Reading from the N-terminus, the 185-residue chain is Ribosome maturation factor RimP (185 aa).

The protein belongs to the RimP family.

The protein resides in the cytoplasm. In terms of biological role, required for maturation of 30S ribosomal subunits. The protein is Ribosome maturation factor RimP of Magnetococcus marinus (strain ATCC BAA-1437 / JCM 17883 / MC-1).